Here is a 227-residue protein sequence, read N- to C-terminus: Arginine ABC transporter permease protein ArtM (227 aa).

One can recognise an ABC transmembrane type-1 domain in the interval 13–209 (IPTSLLLTVV…IITGIATLLL (197 aa)). 5 consecutive transmembrane segments (helical) span residues 17–37 (LLLTVVSLLIAFFLALFLTFL), 51–71 (LYLTLFTGTPLLVQFFLIYAG), 78–98 (IIDSPLWYVLSNAWFCAALAL), 155–175 (IILVFKGTALASTITIMDIMG), and 188–208 (LTIYGIAGGIYLIITGIATLL).

It belongs to the binding-protein-dependent transport system permease family. HisMQ subfamily. As to quaternary structure, the complex is composed of two ATP-binding proteins (ArtP), two transmembrane proteins (ArtM and ArtQ) and a solute-binding protein (ArtI).

Its subcellular location is the cell inner membrane. In terms of biological role, part of the ABC transporter complex ArtPIQM involved in arginine transport. Probably responsible for the translocation of the substrate across the membrane. The sequence is that of Arginine ABC transporter permease protein ArtM (artM) from Haemophilus influenzae (strain ATCC 51907 / DSM 11121 / KW20 / Rd).